The following is a 312-amino-acid chain: DNA-directed RNA polymerase subunit alpha (312 aa).

The tract at residues 1–226 (MIEFEKPIIT…EHLNLFTDLT (226 aa)) is alpha N-terminal domain (alpha-NTD). The segment at 243–312 (DEKVLDRTIE…DLGLGLKNDK (70 aa)) is alpha C-terminal domain (alpha-CTD).

The protein belongs to the RNA polymerase alpha chain family. Homodimer. The RNAP catalytic core consists of 2 alpha, 1 beta, 1 beta' and 1 omega subunit. When a sigma factor is associated with the core the holoenzyme is formed, which can initiate transcription.

The enzyme catalyses RNA(n) + a ribonucleoside 5'-triphosphate = RNA(n+1) + diphosphate. Functionally, DNA-dependent RNA polymerase catalyzes the transcription of DNA into RNA using the four ribonucleoside triphosphates as substrates. The polypeptide is DNA-directed RNA polymerase subunit alpha (Streptococcus mutans serotype c (strain ATCC 700610 / UA159)).